Reading from the N-terminus, the 431-residue chain is Argininosuccinate lyase (431 aa).

It belongs to the lyase 1 family. Argininosuccinate lyase subfamily.

The protein localises to the cytoplasm. It carries out the reaction 2-(N(omega)-L-arginino)succinate = fumarate + L-arginine. It participates in amino-acid biosynthesis; L-arginine biosynthesis; L-arginine from L-ornithine and carbamoyl phosphate: step 3/3. This Xanthomonas oryzae pv. oryzae (strain MAFF 311018) protein is Argininosuccinate lyase.